A 251-amino-acid chain; its full sequence is Meso-2,3-butanediol dehydrogenase (251 aa).

N15, M17, D36, D60, V61, and N87 together coordinate NAD(+). S138, S140, and Y151 together coordinate (R)-acetoin. Position 138 (S138) interacts with (S)-acetoin. Residues Y151, K155, V184, and T186 each coordinate NAD(+). Y151 contacts (S)-acetoin. Catalysis depends on Y151, which acts as the Proton acceptor.

It belongs to the short-chain dehydrogenases/reductases (SDR) family. As to quaternary structure, homotetramer; dimer of dimers.

It carries out the reaction (R,S)-butane-2,3-diol + NAD(+) = (R)-acetoin + NADH + H(+). The enzyme catalyses (S,S)-butane-2,3-diol + NAD(+) = (S)-acetoin + NADH + H(+). The catalysed reaction is (S)-acetoin + NAD(+) = diacetyl + NADH + H(+). Its activity is regulated as follows. Oxidation of meso-2,3-butanediol is enhanced in the presence of Fe(2+). Reduction of diacetyl and (3S/3R)-acetoin is slightly enhanced in the presence of Mg(2+) and Mn(2+). Activity is inhibited by several metal ions, particularly Fe(3+) for reduction of diacetyl and acetoin. Catalyzes the NAD-dependent oxidation of meso-2,3-butanediol to (3R)-acetoin, and of (2S,3S)-2,3-butanediol to (3S)-acetoin, with much lower efficiency. Can also oxidize several primary alcohols such as glycerol, 1-2-pentanediol and 1,2-propanediol, with lower activity. Cannot use (2R,3R)-2,3-butanediol. In the presence of NADH, catalyzes the reduction of (3R)-acetoin to meso-2,3-butanediol, of (3S)-acetoin to (2S,3S)-2,3-butanediol and of diacetyl to (3S)-acetoin. No activity is detected with NADPH/NADP(+). This is Meso-2,3-butanediol dehydrogenase from Serratia marcescens.